Reading from the N-terminus, the 275-residue chain is NH(3)-dependent NAD(+) synthetase (275 aa).

Residue 50–57 participates in ATP binding; sequence GISGGVDS. Asp-56 contacts Mg(2+). Arg-147 contacts deamido-NAD(+). Residue Thr-167 participates in ATP binding. Glu-172 is a Mg(2+) binding site. Lys-180 and Asp-187 together coordinate deamido-NAD(+). Residues Lys-196 and Thr-218 each coordinate ATP. 267 to 268 contributes to the deamido-NAD(+) binding site; sequence HK.

The protein belongs to the NAD synthetase family. As to quaternary structure, homodimer.

The enzyme catalyses deamido-NAD(+) + NH4(+) + ATP = AMP + diphosphate + NAD(+) + H(+). It participates in cofactor biosynthesis; NAD(+) biosynthesis; NAD(+) from deamido-NAD(+) (ammonia route): step 1/1. Catalyzes the ATP-dependent amidation of deamido-NAD to form NAD. Uses ammonia as a nitrogen source. This chain is NH(3)-dependent NAD(+) synthetase, found in Pseudomonas savastanoi pv. phaseolicola (strain 1448A / Race 6) (Pseudomonas syringae pv. phaseolicola (strain 1448A / Race 6)).